The chain runs to 130 residues: Small ribosomal subunit protein uS9 (130 aa).

The protein belongs to the universal ribosomal protein uS9 family.

This chain is Small ribosomal subunit protein uS9, found in Neisseria gonorrhoeae (strain ATCC 700825 / FA 1090).